Reading from the N-terminus, the 265-residue chain is Pyrroline-5-carboxylate reductase (265 aa).

This sequence belongs to the pyrroline-5-carboxylate reductase family.

Its subcellular location is the cytoplasm. The enzyme catalyses L-proline + NADP(+) = (S)-1-pyrroline-5-carboxylate + NADPH + 2 H(+). The catalysed reaction is L-proline + NAD(+) = (S)-1-pyrroline-5-carboxylate + NADH + 2 H(+). It functions in the pathway amino-acid biosynthesis; L-proline biosynthesis; L-proline from L-glutamate 5-semialdehyde: step 1/1. Catalyzes the reduction of 1-pyrroline-5-carboxylate (PCA) to L-proline. This chain is Pyrroline-5-carboxylate reductase, found in Aquifex aeolicus (strain VF5).